Here is a 170-residue protein sequence, read N- to C-terminus: Probable phospholipid hydroperoxide glutathione peroxidase (170 aa).

Residue Cys-44 is part of the active site.

The protein belongs to the glutathione peroxidase family.

The protein resides in the cytoplasm. It carries out the reaction a hydroperoxy polyunsaturated fatty acid + 2 glutathione = a hydroxy polyunsaturated fatty acid + glutathione disulfide + H2O. Its function is as follows. Protects cells and enzymes from oxidative damage, by catalyzing the reduction of hydrogen peroxide, lipid peroxides and organic hydroperoxide, by glutathione. This is Probable phospholipid hydroperoxide glutathione peroxidase (GPXMC1) from Mesembryanthemum crystallinum (Common ice plant).